The following is a 117-amino-acid chain: UPF0342 protein lwe2240 (117 aa).

Belongs to the UPF0342 family.

The protein is UPF0342 protein lwe2240 of Listeria welshimeri serovar 6b (strain ATCC 35897 / DSM 20650 / CCUG 15529 / CIP 8149 / NCTC 11857 / SLCC 5334 / V8).